The chain runs to 156 residues: Transcription elongation factor GreA (156 aa).

Residues 2–27 (EKTFPMTKEGLDKLKAELENLKLVKR) adopt a coiled-coil conformation.

This sequence belongs to the GreA/GreB family.

Functionally, necessary for efficient RNA polymerase transcription elongation past template-encoded arresting sites. The arresting sites in DNA have the property of trapping a certain fraction of elongating RNA polymerases that pass through, resulting in locked ternary complexes. Cleavage of the nascent transcript by cleavage factors such as GreA or GreB allows the resumption of elongation from the new 3'terminus. GreA releases sequences of 2 to 3 nucleotides. The sequence is that of Transcription elongation factor GreA from Lactococcus lactis subsp. cremoris (strain MG1363).